Reading from the N-terminus, the 221-residue chain is uncharacterized protein (221 aa).

The segment at 1–30 (MVPPNPAHQPARRTQPQLQPQSQPRAQPLP) is disordered. Polar residues predominate over residues 12–25 (RRTQPQLQPQSQPR). The chain crosses the membrane as a helical span at residues 37–57 (VLCIIVALVLLGLLVGLAILI).

It localises to the membrane. This is an uncharacterized protein from Arabidopsis thaliana (Mouse-ear cress).